A 529-amino-acid chain; its full sequence is Tyrosine-protein kinase Fgr (529 aa).

A lipid anchor (N-myristoyl glycine) is attached at Gly2. 2 S-palmitoyl cysteine lipidation sites follow: Cys3 and Cys6. Tyr34 carries the phosphotyrosine modification. The SH3 domain occupies 77-138 (IGVTLFIALY…PSNYVAPVDS (62 aa)). The SH2 domain occupies 144–241 (WYFGKIGRKD…GLCNLLIAPC (98 aa)). Residue Tyr208 is modified to Phosphotyrosine. Ser218 bears the Phosphoserine mark. Residues 263–516 (ITLERRLGTG…YLQSFLEDYF (254 aa)) form the Protein kinase domain. ATP-binding positions include 269 to 277 (LGTGCFGDV) and Lys291. The Proton acceptor role is filled by Asp382. At Tyr412 the chain carries Phosphotyrosine. Tyr523 is modified (phosphotyrosine; by SRC).

This sequence belongs to the protein kinase superfamily. Tyr protein kinase family. SRC subfamily. Interacts with ITGB1, ITGB2, MS4A2/FCER1B, FCER1G, FCGR2A and/or FCGR2B. Interacts (via SH2 domain) with SYK (tyrosine phosphorylated). Interacts (via SH2 domain) with FLT3 (tyrosine phosphorylated). Interacts with PTK2/FAK1. Interacts (via SH2 domain) with HCLS1 (tyrosine phosphorylated by SYK). Interacts with SIRPA and PTPNS1. Interacts (not phosphorylated on tyrosine residues) with CBL; FGR tyrosine phosphorylation promotes dissociation. Interacts with PIK3R1 and FASLG. Interacts with CLNK. Post-translationally, ubiquitinated. Becomes ubiquitinated in response to ITGB2 signaling; this does not lead to degradation. In terms of processing, phosphorylated. Autophosphorylated on tyrosine residues. Becomes phosphorylated in response to FCGR2A and/or FCGR2B engagement, cell adhesion and signaling by ITGB2. Prior phosphorylation at Tyr-523 by SRC inhibits ulterior autophosphorylation at Tyr-412. As to expression, detected in neutrophils, monocytes and natural killer cells (at protein level). Detected in monocytes and large lymphocytes.

It localises to the cell membrane. The protein localises to the cell projection. Its subcellular location is the ruffle membrane. The protein resides in the cytoplasm. It is found in the cytosol. It localises to the cytoskeleton. The protein localises to the mitochondrion inner membrane. Its subcellular location is the mitochondrion intermembrane space. It catalyses the reaction L-tyrosyl-[protein] + ATP = O-phospho-L-tyrosyl-[protein] + ADP + H(+). With respect to regulation, activated by autophosphorylation. Prior phosphorylation at Tyr-523 by SRC inhibits ulterior autophosphorylation at Tyr-412. Activated by phorbol myristate acetate, phosphatidic acid and poly-Lys. Binding (via SH2 domain) of HCLS1 that is already phosphorylated by SYK strongly increases kinase activity. Its function is as follows. Non-receptor tyrosine-protein kinase that transmits signals from cell surface receptors devoid of kinase activity and contributes to the regulation of immune responses, including neutrophil, monocyte, macrophage and mast cell functions, cytoskeleton remodeling in response to extracellular stimuli, phagocytosis, cell adhesion and migration. Promotes mast cell degranulation, release of inflammatory cytokines and IgE-mediated anaphylaxis. Acts downstream of receptors that bind the Fc region of immunoglobulins, such as MS4A2/FCER1B, FCGR2A and/or FCGR2B. Acts downstream of ITGB1 and ITGB2, and regulates actin cytoskeleton reorganization, cell spreading and adhesion. Depending on the context, activates or inhibits cellular responses. Functions as a negative regulator of ITGB2 signaling, phagocytosis and SYK activity in monocytes. Required for normal ITGB1 and ITGB2 signaling, normal cell spreading and adhesion in neutrophils and macrophages. Functions as a positive regulator of cell migration and regulates cytoskeleton reorganization via RAC1 activation. Phosphorylates SYK (in vitro) and promotes SYK-dependent activation of AKT1 and MAP kinase signaling. Phosphorylates PLD2 in antigen-stimulated mast cells, leading to PLD2 activation and the production of the signaling molecules lysophosphatidic acid and diacylglycerol. Promotes activation of PIK3R1. Phosphorylates FASLG, and thereby regulates its ubiquitination and subsequent internalization. Phosphorylates ABL1. Promotes phosphorylation of CBL, CTTN, PIK3R1, PTK2/FAK1, PTK2B/PYK2 and VAV2. Phosphorylates HCLS1 that has already been phosphorylated by SYK, but not unphosphorylated HCLS1. Together with CLNK, it acts as a negative regulator of natural killer cell-activating receptors and inhibits interferon-gamma production. The polypeptide is Tyrosine-protein kinase Fgr (FGR) (Homo sapiens (Human)).